The following is a 302-amino-acid chain: 4-diphosphocytidyl-2-C-methyl-D-erythritol kinase (302 aa).

K20 is a catalytic residue. 106–116 (PVASGVGGGSG) lines the ATP pocket. Residue D148 is part of the active site.

Belongs to the GHMP kinase family. IspE subfamily.

It catalyses the reaction 4-CDP-2-C-methyl-D-erythritol + ATP = 4-CDP-2-C-methyl-D-erythritol 2-phosphate + ADP + H(+). The protein operates within isoprenoid biosynthesis; isopentenyl diphosphate biosynthesis via DXP pathway; isopentenyl diphosphate from 1-deoxy-D-xylulose 5-phosphate: step 3/6. Catalyzes the phosphorylation of the position 2 hydroxy group of 4-diphosphocytidyl-2C-methyl-D-erythritol. This chain is 4-diphosphocytidyl-2-C-methyl-D-erythritol kinase, found in Bartonella henselae (strain ATCC 49882 / DSM 28221 / CCUG 30454 / Houston 1) (Rochalimaea henselae).